A 76-amino-acid chain; its full sequence is Sec-independent protein translocase protein TatA (76 aa).

The chain crosses the membrane as a helical span at residues 1–21 (MGGLSIWHWLIVLLIVALVFG). The disordered stretch occupies residues 43-76 (MKDGDAPADAQQLPRSGTVDVNAKEATRSDSNKA). Residues 64–76 (NAKEATRSDSNKA) are compositionally biased toward basic and acidic residues.

This sequence belongs to the TatA/E family. As to quaternary structure, the Tat system comprises two distinct complexes: a TatABC complex, containing multiple copies of TatA, TatB and TatC subunits, and a separate TatA complex, containing only TatA subunits. Substrates initially bind to the TatABC complex, which probably triggers association of the separate TatA complex to form the active translocon.

The protein resides in the cell inner membrane. Functionally, part of the twin-arginine translocation (Tat) system that transports large folded proteins containing a characteristic twin-arginine motif in their signal peptide across membranes. TatA could form the protein-conducting channel of the Tat system. This is Sec-independent protein translocase protein TatA from Burkholderia multivorans (strain ATCC 17616 / 249).